Consider the following 374-residue polypeptide: Relaxin-3 receptor 2 (374 aa).

Topologically, residues 1 to 43 are extracellular; the sequence is MPTLNTSASPPTFFWANASGGSVLSADDAPMPVKFLALRLMVA. 2 N-linked (GlcNAc...) asparagine glycosylation sites follow: asparagine 5 and asparagine 17. The chain crosses the membrane as a helical span at residues 44–64; it reads LAYGLVGAIGLLGNLAVLWVL. The Cytoplasmic segment spans residues 65–78; sequence SNCARRAPGPPSDT. Residues 79–99 traverse the membrane as a helical segment; that stretch reads FVFNLALADLGLALTLPFWAA. The Extracellular portion of the chain corresponds to 100–116; that stretch reads ESALDFHWPFGGALCKM. Cysteine 114 and cysteine 191 are disulfide-bonded. Residues 117-137 traverse the membrane as a helical segment; the sequence is VLTATVLNVYASIFLITALSV. Over 138–154 the chain is Cytoplasmic; that stretch reads ARYWVVAMAAGPGTHLS. Residues 155–175 traverse the membrane as a helical segment; sequence LFWARIATLAVWAAAALVTVP. At 176–209 the chain is on the extracellular side; sequence TAVFGVEGEVCGVRLCLLRFPSRYWLGAYQLQRV. A helical membrane pass occupies residues 210–230; the sequence is VLAFMVPLGVITTSYLLLLAF. Residues 231 to 249 lie on the Cytoplasmic side of the membrane; that stretch reads LQRRQRRRQDSRVVARSVR. A helical transmembrane segment spans residues 250 to 270; the sequence is ILVASFFLCWFPNHVVTLWGV. At 271–281 the chain is on the extracellular side; that stretch reads LVKFDLVPWNS. Residues 282-302 traverse the membrane as a helical segment; that stretch reads TFYTIQTYVFPVTTCLAHSNS. The Cytoplasmic segment spans residues 303 to 374; it reads CLNPVLYCLL…LTNLDRGTPG (72 aa).

The protein belongs to the G-protein coupled receptor 1 family. In terms of tissue distribution, expressed in a broader range of tissues including brain, kidney, testis, thymus, placenta, prostate, salivary gland, thyroid and colon.

The protein localises to the cell membrane. High affinity receptor for INSL5. Also acts as a receptor for RLN3/relaxin-3, as well as bradykinin and kallidin. Binding of the ligand inhibit cAMP accumulation. This is Relaxin-3 receptor 2 (RXFP4) from Homo sapiens (Human).